A 566-amino-acid polypeptide reads, in one-letter code: Sulfite reductase [NADPH] hemoprotein beta-component (566 aa).

The [4Fe-4S] cluster site is built by Cys-430, Cys-436, Cys-475, and Cys-479. Cys-479 contributes to the siroheme binding site.

It belongs to the nitrite and sulfite reductase 4Fe-4S domain family. As to quaternary structure, alpha(8)-beta(8). The alpha component is a flavoprotein, the beta component is a hemoprotein. It depends on siroheme as a cofactor. [4Fe-4S] cluster serves as cofactor.

The enzyme catalyses hydrogen sulfide + 3 NADP(+) + 3 H2O = sulfite + 3 NADPH + 4 H(+). It functions in the pathway sulfur metabolism; hydrogen sulfide biosynthesis; hydrogen sulfide from sulfite (NADPH route): step 1/1. Its function is as follows. Component of the sulfite reductase complex that catalyzes the 6-electron reduction of sulfite to sulfide. This is one of several activities required for the biosynthesis of L-cysteine from sulfate. The polypeptide is Sulfite reductase [NADPH] hemoprotein beta-component (Baumannia cicadellinicola subsp. Homalodisca coagulata).